Reading from the N-terminus, the 807-residue chain is 85/88 kDa calcium-independent phospholipase A2 (807 aa).

A Phosphoserine modification is found at S13. 9 ANK repeats span residues 120 to 147, 151 to 181, 185 to 215, 219 to 248, 251 to 281, 286 to 312, 316 to 345, 349 to 378, and 382 to 403; these read WTVT…ANST, EGCT…QMDV, KGET…GLNQ, QGLT…RCNI, PGGF…QIHS, YGAS…DVDS, SGNT…NAGA, HGNT…EVDT, and FGET…KALL. 2 helical membrane passes run 481–501 and 512–532; these read LLCL…LIAI and LFDW…ILHS. The PNPLA domain maps to 482–666; sequence LCLDGGGVKG…LANNPTLDAM (185 aa). The short motif at 486–491 is the GXGXXG element; sequence GGGVKG. The short motif at 518 to 522 is the GXSXG element; that stretch reads GTSTG. Residue S520 is the Nucleophile of the active site. The active-site Proton acceptor is the D653. Positions 653–655 match the DGA/G motif; it reads DGG. Residues 678–687 form a calmodulin-binding (1-9-14 motif) region; it reads RKGQGNKVKK. Residues 749–760 form a calmodulin-binding (IQ motif) region; sequence AWCEMVGIQYFR.

Homodimer formed by catalytic domains tightly interacting through a large hydrophobic interface. The contact area involves 3 alpha helices, several loops and a part of the beta sheet from each monomer. Both active sites of the dimer are in close proximity adopting an open conformation that provide sufficient space for phospholipid access and favoring cooperativity in deacylation-reacylation reactions. Each monomer has 9 ankyrin repeats stacked side-by-side in an elongated structure oriented outwards from the catalytic core. Expressed in pancreatic beta-cells. Expressed in skeletal muscle (at protein level).

It localises to the cytoplasm. Its subcellular location is the cell membrane. It is found in the mitochondrion. The protein localises to the cell projection. The protein resides in the pseudopodium. The catalysed reaction is a 1,2-diacyl-sn-glycero-3-phosphocholine + H2O = a 1-acyl-sn-glycero-3-phosphocholine + a fatty acid + H(+). It carries out the reaction a 1-O-alkyl-2-acyl-sn-glycero-3-phosphocholine + H2O = a 1-O-alkyl-sn-glycero-3-phosphocholine + a fatty acid + H(+). The enzyme catalyses 1,2-dihexadecanoyl-sn-glycero-3-phosphocholine + H2O = 1-hexadecanoyl-sn-glycero-3-phosphocholine + hexadecanoate + H(+). It catalyses the reaction 1-hexadecanoyl-2-(9Z-octadecenoyl)-sn-glycero-3-phosphocholine + H2O = 1-hexadecanoyl-sn-glycero-3-phosphocholine + (9Z)-octadecenoate + H(+). The catalysed reaction is 1-hexadecanoyl-2-(9Z,12Z-octadecadienoyl)-sn-glycero-3-phosphocholine + H2O = (9Z,12Z)-octadecadienoate + 1-hexadecanoyl-sn-glycero-3-phosphocholine + H(+). It carries out the reaction 1-hexadecanoyl-2-(5Z,8Z,11Z,14Z-eicosatetraenoyl)-sn-glycero-3-phosphocholine + H2O = 1-hexadecanoyl-sn-glycero-3-phosphocholine + (5Z,8Z,11Z,14Z)-eicosatetraenoate + H(+). The enzyme catalyses 1-octadecanoyl-2-(5Z,8Z,11Z,14Z-eicosatetraenoyl)-sn-glycero-3-phosphocholine + H2O = 1-octadecanoyl-sn-glycero-3-phosphocholine + (5Z,8Z,11Z,14Z)-eicosatetraenoate + H(+). It catalyses the reaction 1-hexadecanoyl-2-(5Z,8Z,11Z,14Z-eicosatetraenoyl)-sn-glycero-3-phosphoethanolamine + H2O = 1-hexadecanoyl-sn-glycero-3-phosphoethanolamine + (5Z,8Z,11Z,14Z)-eicosatetraenoate + H(+). The catalysed reaction is 1,2-dihexadecanoyl-sn-glycero-3-phosphate + H2O = 1-hexadecanoyl-sn-glycero-3-phosphate + hexadecanoate + H(+). It carries out the reaction a 1-acyl-sn-glycero-3-phosphocholine + H2O = sn-glycerol 3-phosphocholine + a fatty acid + H(+). The enzyme catalyses 1-hexadecanoyl-sn-glycero-3-phosphocholine + H2O = sn-glycerol 3-phosphocholine + hexadecanoate + H(+). It catalyses the reaction 1-(5Z,8Z,11Z,14Z-eicosatetraenoyl)-sn-glycero-3-phosphocholine + H2O = sn-glycerol 3-phosphocholine + (5Z,8Z,11Z,14Z)-eicosatetraenoate + H(+). The catalysed reaction is 2-(5Z,8Z,11Z,14Z)-eicosatetraenoyl-sn-glycero-3-phosphocholine + H2O = sn-glycerol 3-phosphocholine + (5Z,8Z,11Z,14Z)-eicosatetraenoate + H(+). It carries out the reaction 1-O-hexadecyl-2-(5Z,8Z,11Z,14Z)-eicosatetraenoyl-sn-glycero-3-phosphocholine + H2O = 1-O-hexadecyl-sn-glycero-3-phosphocholine + (5Z,8Z,11Z,14Z)-eicosatetraenoate + H(+). The enzyme catalyses 1-O-hexadecyl-2-acetyl-sn-glycero-3-phosphocholine + H2O = 1-O-hexadecyl-sn-glycero-3-phosphocholine + acetate + H(+). It catalyses the reaction hexadecanoyl-CoA + H2O = hexadecanoate + CoA + H(+). The catalysed reaction is 1',3'-bis[1,2-di-(9Z-octadecenoyl)-sn-glycero-3-phospho]-glycerol + H2O = 1'-[1,2-di-(9Z-octadecenoyl)-sn-glycero-3-phospho]-3'-[1-(9Z-octadecenoyl)-sn-glycero-3-phospho]-glycerol + (9Z)-octadecenoate + H(+). It carries out the reaction 1'-[1,2-di-(9Z-octadecenoyl)-sn-glycero-3-phospho]-3'-[1-(9Z-octadecenoyl)-sn-glycero-3-phospho]-glycerol + H2O = 1',3'-bis-[1-(9Z-octadecenoyl)-sn-glycero-3-phospho]-glycerol + (9Z)-octadecenoate + H(+). The enzyme catalyses 1',3'-bis-[1,2-di-(9Z,12Z-octadecadienoyl)-sn-glycero-3-phospho]-glycerol + H2O = 1'-[1,2-di-(9Z,12Z-octadecadienoyl)-sn-glycero-3-phospho]-3'-[1-(9Z,12Z-octadecadienoyl)-sn-glycero-3-phospho]-glycerol + (9Z,12Z)-octadecadienoate + H(+). It catalyses the reaction 1-octadecanoyl-2-(15-hydroxy-(5Z,8Z,11Z,13E)-eicosatetraenoyl)-sn-glycero-3-phosphoethanolamine + H2O = 1-octadecanoyl-sn-glycero-3-phosphoethanolamine + 15-hydroxy-(5Z,8Z,11Z,13E)-eicosatetraenoate + H(+). With respect to regulation, activated by ATP. Inhibited by calcium-activated calmodulin. Inhibited by bromoenol lactone (BEL). Its function is as follows. Calcium-independent phospholipase involved in phospholipid remodeling with implications in cellular membrane homeostasis, mitochondrial integrity and signal transduction. Hydrolyzes the ester bond of the fatty acyl group attached at sn-1 or sn-2 position of phospholipids (phospholipase A1 and A2 activity respectively), producing lysophospholipids that are used in deacylation-reacylation cycles. Hydrolyzes both saturated and unsaturated long fatty acyl chains in various glycerophospholipid classes such as phosphatidylcholines, phosphatidylethanolamines and phosphatidates, with a preference for hydrolysis at sn-2 position. Can further hydrolyze lysophospholipids carrying saturated fatty acyl chains (lysophospholipase activity). Upon oxidative stress, contributes to remodeling of mitochondrial phospholipids in pancreatic beta cells, in a repair mechanism to reduce oxidized lipid content. Preferentially hydrolyzes oxidized polyunsaturated fatty acyl chains from cardiolipins, yielding monolysocardiolipins that can be reacylated with unoxidized fatty acyls to regenerate native cardiolipin species. Hydrolyzes oxidized glycerophosphoethanolamines present in pancreatic islets, releasing oxidized polyunsaturated fatty acids such as hydroxyeicosatetraenoates (HETEs). Has thioesterase activity toward fatty-acyl CoA releasing CoA-SH known to facilitate fatty acid transport and beta-oxidation in mitochondria particularly in skeletal muscle. Plays a role in regulation of membrane dynamics and homeostasis. Selectively hydrolyzes sn-2 arachidonoyl group in plasmalogen phospholipids, structural components of lipid rafts and myelin. Regulates F-actin polymerization at the pseudopods, which is required for both speed and directionality of MCP1/CCL2-induced monocyte chemotaxis. Targets membrane phospholipids to produce potent lipid signaling messengers. Generates lysophosphatidate (LPA, 1-acyl-glycerol-3-phosphate), which acts via G-protein receptors in various cell types. Has phospholipase A2 activity toward platelet-activating factor (PAF, 1-O-alkyl-2-acetyl-sn-glycero-3-phosphocholine), likely playing a role in inactivation of this potent pro-inflammatory signaling lipid. In response to glucose, amplifies calcium influx in pancreatic beta cells to promote INS secretion. This chain is 85/88 kDa calcium-independent phospholipase A2 (Pla2g6), found in Rattus norvegicus (Rat).